Here is a 52-residue protein sequence, read N- to C-terminus: Conotoxin reg3h (52 aa).

Ala-1 is a signal peptide. A propeptide spanning residues 2-33 (LPLDGDQPADQPAERMQDISPELNPLFHPVKR) is cleaved from the precursor. 3 cysteine pairs are disulfide-bonded: Cys-35/Cys-49, Cys-36/Cys-47, and Cys-41/Cys-50. Pro-38, Pro-48, and Pro-51 each carry 4-hydroxyproline. An Asparagine amide modification is found at Asn-52.

In terms of tissue distribution, expressed by the venom duct.

It localises to the secreted. The protein is Conotoxin reg3h of Conus regius (Crown cone).